Reading from the N-terminus, the 647-residue chain is Neuronal PAS domain-containing protein 4-like (647 aa).

Residues 16–29 (KRFRSTKGASKARR) are basic motif; degenerate. A bHLH domain is found at 16–67 (KRFRSTKGASKARRDQMNSEIRNLRALLPISPEHRLSYLHSMSITCTYIRKS). Residues 30 to 67 (DQMNSEIRNLRALLPISPEHRLSYLHSMSITCTYIRKS) form a helix-loop-helix motif region. PAS domains follow at residues 117-181 (VLQA…SPSG) and 238-274 (SADMRLASASSSVLFHLGFSADELIGRSWYELLHPDD).

As to quaternary structure, heterodimer; efficient DNA binding requires dimerization with another bHLH protein. As to expression, specifically expressed in endothelial and hematopoietic precursor cells.

It localises to the nucleus. Functionally, transcription factor specifically expressed in endothelial and hematopoietic precursor cells that acts as a key regulator of the endothelial differentiation cascade. Acts as an early-response transcription factor that regulates the expression of early regulators of endothelial and haematopoietic differentiation, such as etv2 and tal1. The sequence is that of Neuronal PAS domain-containing protein 4-like from Danio rerio (Zebrafish).